The following is a 554-amino-acid chain: Zinc finger protein syd-9 (554 aa).

3 consecutive C2H2-type zinc fingers follow at residues 20–43, 65–87, and 93–116; these read LTCPQCPKSFSSTKLLQQHQQMFH, FICETCGKAFRFRSNLAEHRSVH, and YVCKFCGKSSRLKGNLTKHILKHH. Disordered stretches follow at residues 136 to 158, 298 to 319, and 342 to 383; these read KIVTKDNGPTTNGSTPTTSTATP, SPDTVQSDHSDDFEQDSPPPMA, and ASGQ…CPSP. Residues 142 to 158 are compositionally biased toward low complexity; the sequence is NGPTTNGSTPTTSTATP. 2 stretches are compositionally biased toward polar residues: residues 351–360 and 370–379; these read PDSTDTQKGC and SDPSTSSGDS. The C2H2-type 4 zinc finger occupies 387-410; it reads LHCKECGTLVRKSSHLPIHMTMSH. The tract at residues 516-554 is disordered; that stretch reads RMEMSLSPIKPFQQRFSRERSSSSSVERSPSRERSRSPL. Residues 544–554 are compositionally biased toward basic and acidic residues; sequence SPSRERSRSPL.

Expressed mainly in body wall muscles and ventral cord motoneurons.

Its subcellular location is the nucleus. The protein localises to the nucleus speckle. Plays a role in regulating synaptic function, probably by modulation of endocytosis. May be dispensable in muscle for normal locomotion. May be involved in post-transcriptional mRNA processing, in parallel with unc-75. In Caenorhabditis elegans, this protein is Zinc finger protein syd-9.